The following is a 626-amino-acid chain: Alpha terpineol synthase, chloroplastic (626 aa).

Residues 1-38 constitute a chloroplast transit peptide; it reads MALLSVAPLASKSRLHKTLITSAHHLKPSPTTIPTLPV. Asp377, Asp381, and Asp529 together coordinate Mg(2+). The DDXXD motif motif lies at 377 to 381; it reads DDIYD.

This sequence belongs to the terpene synthase family. Tpsd subfamily. The cofactor is Mg(2+). It depends on Mn(2+) as a cofactor.

The protein resides in the plastid. It is found in the chloroplast. The enzyme catalyses (2E)-geranyl diphosphate + H2O = (S)-alpha-terpineol + diphosphate. It catalyses the reaction (2E)-geranyl diphosphate + H2O = (R)-alpha-terpineol + diphosphate. The catalysed reaction is (2E)-geranyl diphosphate + H2O = (2E)-geraniol + diphosphate. It carries out the reaction (2E)-geranyl diphosphate = terpinolene + diphosphate. The enzyme catalyses (2E)-geranyl diphosphate = (4S)-limonene + diphosphate. It functions in the pathway terpene metabolism; oleoresin biosynthesis. The protein operates within secondary metabolite biosynthesis; terpenoid biosynthesis. Monoterpene synthase (TPS) involved in the biosynthesis of monoterpene natural products included in conifer oleoresin secretions and volatile emissions; these compounds contribute to biotic and abiotic stress defense against herbivores and pathogens. Catalyzes the conversion of (2E)-geranyl diphosphate (GPP) to (-)-alpha-terpineol, (+)-alpha-terpineol and terpin-4-ol, and, to a lower extent, to geraniol, terpinolene and (-)-limonene. The chain is Alpha terpineol synthase, chloroplastic from Pinus banksiana (Jack pine).